Here is a 416-residue protein sequence, read N- to C-terminus: Phosphoglycerate kinase (416 aa).

(2R)-3-phosphoglycerate-binding residues include V23, D24, F25, N26, R39, S62, H63, G65, R66, L121, R122, H169, and R170. G213 provides a ligand contact to ADP. A CDP-binding site is contributed by G213. AMP contacts are provided by A214 and K215. A214 contacts ATP. A Mg(2+)-binding site is contributed by A214. D218 contacts CDP. D218 is a Mg(2+) binding site. K219 is an AMP binding site. Residue K219 participates in ATP binding. Residue G237 participates in ADP binding. A CDP-binding site is contributed by G237. AMP contacts are provided by G238 and G312. ATP-binding residues include G238 and G312. The CDP site is built by G337 and F342. Residue F342 coordinates ADP. E343 lines the AMP pocket. 3 residues coordinate ATP: E343, D374, and T375. D374 is a Mg(2+) binding site.

It belongs to the phosphoglycerate kinase family. As to quaternary structure, monomer. It depends on Mg(2+) as a cofactor.

It localises to the cytoplasm. Its subcellular location is the mitochondrion. The catalysed reaction is (2R)-3-phosphoglycerate + ATP = (2R)-3-phospho-glyceroyl phosphate + ADP. It participates in carbohydrate degradation; glycolysis; pyruvate from D-glyceraldehyde 3-phosphate: step 2/5. Catalyzes one of the two ATP producing reactions in the glycolytic pathway via the reversible conversion of 1,3-diphosphoglycerate to 3-phosphoglycerate. Both L- and D- forms of purine and pyrimidine nucleotides can be used as substrates, but the activity is much lower on pyrimidines. Negatively regulates the biosynthesis of acetyl-CoA from pyruvate in the mitochondrion. This chain is Phosphoglycerate kinase (pgkA), found in Agaricus bisporus (White button mushroom).